The following is a 230-amino-acid chain: Voltage-gated hydrogen channel 1 (230 aa).

Residues 1–58 lie on the Cytoplasmic side of the membrane; it reads MAGCLRHFTSVGDDTKKREWKQEDVEVAYEEPLKNTPHPFIASYSFRGALKWLLSSHK. A helical membrane pass occupies residues 59–79; it reads FQIVIICLVILDALFVLVEVL. The Extracellular portion of the chain corresponds to 80–96; sequence LDLELLAEKVDHIIPEI. Residues 97 to 119 form a helical membrane-spanning segment; that stretch reads FHYLSISVLTFFILEIAGKLYAF. At 120–127 the chain is on the cytoplasmic side; that stretch reads RLEFFHHK. The chain crosses the membrane as a helical span at residues 128 to 148; that stretch reads FEVFDAAIVVISFIIDIVYIS. Residues 149–155 are Extracellular-facing; that stretch reads REDIFNA. A helical membrane pass occupies residues 156–176; it reads VGLLILLRLWRVARIVNGVIV. Topologically, residues 177–230 are cytoplasmic; that stretch reads SVKTRAEEKMHKLKEQKGSLLEKVAQLEQQCAQQEQEIGRLHKLLQEHNVFPAS. Positions 178 to 225 form a coiled coil; that stretch reads VKTRAEEKMHKLKEQKGSLLEKVAQLEQQCAQQEQEIGRLHKLLQEHN.

This sequence belongs to the hydrogen channel family. Homodimer.

The protein resides in the membrane. It localises to the cell membrane. In terms of biological role, mediates the voltage-dependent proton permeability of excitable membranes. Forms a proton-selective channel through which protons may pass in accordance with their electrochemical gradient. This is Voltage-gated hydrogen channel 1 (hvcn1) from Xenopus laevis (African clawed frog).